The sequence spans 456 residues: Bifunctional protein GlmU (456 aa).

The interval 1 to 229 (MLNSAMSVVI…ISETDGVNNR (229 aa)) is pyrophosphorylase. UDP-N-acetyl-alpha-D-glucosamine is bound by residues 11–14 (LAAG), Lys-25, Gln-76, 81–82 (GT), 103–105 (YGD), Gly-140, Glu-154, Asn-169, and Asn-227. Asp-105 provides a ligand contact to Mg(2+). Residue Asn-227 participates in Mg(2+) binding. The interval 230–250 (LQLSRLERIYQAEQAEKLLLS) is linker. Residues 251–456 (GVMLRDPARF…QGWQRPVKKK (206 aa)) form an N-acetyltransferase region. Positions 333 and 351 each coordinate UDP-N-acetyl-alpha-D-glucosamine. His-363 serves as the catalytic Proton acceptor. UDP-N-acetyl-alpha-D-glucosamine is bound by residues Tyr-366 and Asn-377. Residues Ala-380, 386–387 (NY), Ser-405, Ala-423, and Arg-440 each bind acetyl-CoA.

This sequence in the N-terminal section; belongs to the N-acetylglucosamine-1-phosphate uridyltransferase family. It in the C-terminal section; belongs to the transferase hexapeptide repeat family. In terms of assembly, homotrimer. The cofactor is Mg(2+).

The protein localises to the cytoplasm. It catalyses the reaction alpha-D-glucosamine 1-phosphate + acetyl-CoA = N-acetyl-alpha-D-glucosamine 1-phosphate + CoA + H(+). The enzyme catalyses N-acetyl-alpha-D-glucosamine 1-phosphate + UTP + H(+) = UDP-N-acetyl-alpha-D-glucosamine + diphosphate. The protein operates within nucleotide-sugar biosynthesis; UDP-N-acetyl-alpha-D-glucosamine biosynthesis; N-acetyl-alpha-D-glucosamine 1-phosphate from alpha-D-glucosamine 6-phosphate (route II): step 2/2. It functions in the pathway nucleotide-sugar biosynthesis; UDP-N-acetyl-alpha-D-glucosamine biosynthesis; UDP-N-acetyl-alpha-D-glucosamine from N-acetyl-alpha-D-glucosamine 1-phosphate: step 1/1. Its pathway is bacterial outer membrane biogenesis; LPS lipid A biosynthesis. In terms of biological role, catalyzes the last two sequential reactions in the de novo biosynthetic pathway for UDP-N-acetylglucosamine (UDP-GlcNAc). The C-terminal domain catalyzes the transfer of acetyl group from acetyl coenzyme A to glucosamine-1-phosphate (GlcN-1-P) to produce N-acetylglucosamine-1-phosphate (GlcNAc-1-P), which is converted into UDP-GlcNAc by the transfer of uridine 5-monophosphate (from uridine 5-triphosphate), a reaction catalyzed by the N-terminal domain. This is Bifunctional protein GlmU from Salmonella schwarzengrund (strain CVM19633).